The chain runs to 84 residues: Cytochrome b559 subunit alpha (84 aa).

The chain crosses the membrane as a helical span at residues 22 to 36; sequence IIHSITIPSLFVAGF. H24 contributes to the heme binding site.

The protein belongs to the PsbE/PsbF family. In terms of assembly, heterodimer of an alpha subunit and a beta subunit. PSII is composed of 1 copy each of membrane proteins PsbA, PsbB, PsbC, PsbD, PsbE, PsbF, PsbH, PsbI, PsbJ, PsbK, PsbL, PsbM, PsbT, PsbX, PsbY, PsbZ, Psb30/Ycf12, at least 3 peripheral proteins of the oxygen-evolving complex and a large number of cofactors. It forms dimeric complexes. Heme b is required as a cofactor.

It is found in the plastid. It localises to the chloroplast thylakoid membrane. Its function is as follows. This b-type cytochrome is tightly associated with the reaction center of photosystem II (PSII). PSII is a light-driven water:plastoquinone oxidoreductase that uses light energy to abstract electrons from H(2)O, generating O(2) and a proton gradient subsequently used for ATP formation. It consists of a core antenna complex that captures photons, and an electron transfer chain that converts photonic excitation into a charge separation. In Emiliania huxleyi (Coccolithophore), this protein is Cytochrome b559 subunit alpha.